The sequence spans 319 residues: Lipoyl synthase (319 aa).

A disordered region spans residues 1-24 (MAVVIDTVGARPRHPEKQANPDTP). Over residues 13–24 (RHPEKQANPDTP) the composition is skewed to basic and acidic residues. [4Fe-4S] cluster contacts are provided by Cys-58, Cys-63, Cys-69, Cys-84, Cys-88, Cys-91, and Ser-298. A Radical SAM core domain is found at 70 to 287 (WDKSHATFMI…EEIARAKGFL (218 aa)).

Belongs to the radical SAM superfamily. Lipoyl synthase family. [4Fe-4S] cluster is required as a cofactor.

The protein resides in the cytoplasm. It catalyses the reaction [[Fe-S] cluster scaffold protein carrying a second [4Fe-4S](2+) cluster] + N(6)-octanoyl-L-lysyl-[protein] + 2 oxidized [2Fe-2S]-[ferredoxin] + 2 S-adenosyl-L-methionine + 4 H(+) = [[Fe-S] cluster scaffold protein] + N(6)-[(R)-dihydrolipoyl]-L-lysyl-[protein] + 4 Fe(3+) + 2 hydrogen sulfide + 2 5'-deoxyadenosine + 2 L-methionine + 2 reduced [2Fe-2S]-[ferredoxin]. It functions in the pathway protein modification; protein lipoylation via endogenous pathway; protein N(6)-(lipoyl)lysine from octanoyl-[acyl-carrier-protein]: step 2/2. Functionally, catalyzes the radical-mediated insertion of two sulfur atoms into the C-6 and C-8 positions of the octanoyl moiety bound to the lipoyl domains of lipoate-dependent enzymes, thereby converting the octanoylated domains into lipoylated derivatives. The protein is Lipoyl synthase of Phenylobacterium zucineum (strain HLK1).